Here is a 349-residue protein sequence, read N- to C-terminus: tRNA pseudouridine synthase D (349 aa).

F27 lines the substrate pocket. The active-site Nucleophile is D80. Substrate is bound at residue N129. The TRUD domain maps to 155 to 303; that stretch reads GVPNYFGAQR…VEAARRAMLL (149 aa). F329 contacts substrate.

This sequence belongs to the pseudouridine synthase TruD family.

The enzyme catalyses uridine(13) in tRNA = pseudouridine(13) in tRNA. Responsible for synthesis of pseudouridine from uracil-13 in transfer RNAs. The chain is tRNA pseudouridine synthase D from Klebsiella pneumoniae subsp. pneumoniae (strain ATCC 700721 / MGH 78578).